The chain runs to 136 residues: General odorant-binding protein 57e (136 aa).

The signal sequence occupies residues 1–20 (MLDQLTLCLLLNFLCANVLA). Intrachain disulfides connect Cys-28–Cys-61, Cys-57–Cys-109, and Cys-98–Cys-118.

This sequence belongs to the PBP/GOBP family.

Its function is as follows. Present in the aqueous fluid surrounding olfactory sensory dendrites and are thought to aid in the capture and transport of hydrophobic odorants into and through this fluid. The sequence is that of General odorant-binding protein 57e from Drosophila melanogaster (Fruit fly).